We begin with the raw amino-acid sequence, 102 residues long: MFQPIYRSNLVIVITLFVSLSYYHTCFVRKRAHIIVQILLCQLFILSCNRSITLLTAWRYLHVMSLILQRCGIIVLKIKLLFGSDVKIFMLLNYGVIKFFSK.

A helical membrane pass occupies residues 5 to 27; that stretch reads IYRSNLVIVITLFVSLSYYHTCF.

Its subcellular location is the host membrane. This is an uncharacterized protein from Microplitis demolitor (Parasitoid wasp).